Reading from the N-terminus, the 347-residue chain is Glucose 1-dehydrogenase (347 aa).

Position 39 (cysteine 39) interacts with Zn(2+). Threonine 41 is a substrate binding site. Zn(2+) is bound by residues histidine 64 and glutamate 65. Positions 110 and 146 each coordinate substrate. Glutamate 146 contacts Zn(2+). NADP(+) is bound by residues 178–181, 260–262, and 289–291; these read AGPV, LGV, and SVN. Asparagine 291 serves as a coordination point for substrate.

The protein belongs to the zinc-containing alcohol dehydrogenase family. Glucose 1-dehydrogenase subfamily. In terms of assembly, homodimer. The cofactor is Zn(2+).

It catalyses the reaction D-glucose + NAD(+) = D-glucono-1,5-lactone + NADH + H(+). It carries out the reaction D-glucose + NADP(+) = D-glucono-1,5-lactone + NADPH + H(+). Catalyzes the NAD(P)(+)-dependent oxidation of D-glucose to D-gluconate via gluconolactone. To a lesser extent, is also active with xylose as substrate, but mannose, arabinose, galactose, fructose 6-phosphate, glucose 6-phosphate, glycerinaldehyde 3-phosphate, ribose, sorbitol, ethanol, erythritol, or lactose are not oxidized by the enzyme. Can utilize both NAD(+) and NADP(+) as electron acceptor, with a marked preference for NADP(+). Is involved in the degradation of glucose through a non-phosphorylative variant of the Entner-Doudoroff pathway. The polypeptide is Glucose 1-dehydrogenase (gdh) (Thermoproteus tenax (strain ATCC 35583 / DSM 2078 / JCM 9277 / NBRC 100435 / Kra 1)).